Consider the following 129-residue polypeptide: UPF0102 protein Cag_1992 (129 aa).

The protein belongs to the UPF0102 family.

This is UPF0102 protein Cag_1992 from Chlorobium chlorochromatii (strain CaD3).